We begin with the raw amino-acid sequence, 588 residues long: Adenine deaminase (588 aa).

The protein belongs to the metallo-dependent hydrolases superfamily. Adenine deaminase family. As to quaternary structure, homodimer. Mn(2+) serves as cofactor.

The enzyme catalyses adenine + H2O + H(+) = hypoxanthine + NH4(+). This chain is Adenine deaminase, found in Shigella sonnei (strain Ss046).